Here is a 218-residue protein sequence, read N- to C-terminus: Ras-related protein Rab-11B (218 aa).

G2 is modified (N-acetylglycine). Citrulline is present on R4. Positions 20, 21, 23, 24, 25, 26, 37, 38, 40, 42, and 43 each coordinate GTP. S25 contacts Mg(2+). The Switch 1 motif lies at 36-47 (FNLESKSTIGVE). 2 residues coordinate Mg(2+): T43 and D66. The Switch 2 signature appears at 67-86 (TAGQERYRAITSAYYRGAVG). GTP-binding residues include G69, N124, K125, D127, A155, and L156. The segment at 184–218 (RAAHDESPGNNVVDISVPPTTDGQKPNKLQCCQNL) is disordered. 2 S-geranylgeranyl cysteine lipidation sites follow: C214 and C215. The residue at position 215 (C215) is a Cysteine methyl ester. The propeptide at 216–218 (QNL) is removed in mature form.

The protein belongs to the small GTPase superfamily. Rab family. As to quaternary structure, interacts with KCNMA1. Interacts with RAB11FIP1, RAB11FIP2, RAB11FIP3 and RAB11FIP4. May interact with TBC1D14. Interacts with ATP6V1E1. Interacts with PI4KB. Interacts (GDP-bound form) with ZFYVE27. Interacts (GDP-bound form) with KIF5A in a ZFYVE27-dependent manner. Interacts with RELCH. Interacts (in GTP-bound form) with TBC1D8B (via domain Rab-GAP TBC). Forms a complex containing RAB11B, ASAP1, Rabin8/RAB3IP, RAP11FIP3 and ARF4. Interacts with WDR44. The cofactor is Mg(2+). In terms of processing, citrullinated by PADI4. (Microbial infection) Glycosylated on arginine residues by S.typhimurium protein Ssek3.

The protein localises to the recycling endosome membrane. The protein resides in the cytoplasmic vesicle. Its subcellular location is the secretory vesicle. It is found in the synaptic vesicle membrane. It localises to the phagosome membrane. It catalyses the reaction GTP + H2O = GDP + phosphate + H(+). Its activity is regulated as follows. Regulated by guanine nucleotide exchange factors (GEFs) which promote the exchange of bound GDP for free GTP. Regulated by GTPase activating proteins (GAPs) which increase the GTP hydrolysis activity. Inhibited by GDP dissociation inhibitors (GDIs) which prevent Rab-GDP dissociation. The small GTPases Rab are key regulators of intracellular membrane trafficking, from the formation of transport vesicles to their fusion with membranes. Rabs cycle between an inactive GDP-bound form and an active GTP-bound form that is able to recruit to membranes different set of downstream effectors directly responsible for vesicle formation, movement, tethering and fusion. The small Rab GTPase RAB11B plays a role in endocytic recycling, regulating apical recycling of several transmembrane proteins including cystic fibrosis transmembrane conductance regulator/CFTR, epithelial sodium channel/ENaC, potassium voltage-gated channel, and voltage-dependent L-type calcium channel. May also regulate constitutive and regulated secretion, like insulin granule exocytosis. Required for melanosome transport and release from melanocytes. Also regulates V-ATPase intracellular transport in response to extracellular acidosis. Promotes Rabin8/RAB3IP preciliary vesicular trafficking to mother centriole by forming a ciliary targeting complex containing Rab11, ASAP1, Rabin8/RAB3IP, RAB11FIP3 and ARF4, thereby regulating ciliogenesis initiation. On the contrary, upon LPAR1 receptor signaling pathway activation, interaction with phosphorylated WDR44 prevents Rab11-RAB3IP-RAB11FIP3 complex formation and cilia growth. In Homo sapiens (Human), this protein is Ras-related protein Rab-11B.